The primary structure comprises 167 residues: E1B protein, small T-antigen (167 aa).

Residues Gly143–Leu167 are disordered.

The protein belongs to the adenoviridae E1B 19 kDa protein family.

The protein resides in the host cell membrane. It is found in the host nucleus envelope. It localises to the host nucleus lamina. Functionally, putative adenovirus Bcl-2 homolog that inhibits apoptosis induced by TNF or FAS pathways, as well as p53-mediated apoptosis. Without E1B 19K function, virus production is compromised because of premature death of host cell. Interacts with Bax protein in cell lysates. This Human adenovirus F serotype 40 (HAdV-40) protein is E1B protein, small T-antigen.